Consider the following 1893-residue polypeptide: Endoribonuclease Dicer (1893 aa).

The region spanning 41–217 (LLEAALDHNT…DLEEKIQKLE (177 aa)) is the Helicase ATP-binding domain. An ATP-binding site is contributed by 54 to 61 (LNSGSGKT). Residues 165–168 (DECH) carry the DECH box motif. Positions 400–424 (VSWSDSEDDDDEDEEIEEKEKTETS) are disordered. Residues 404-416 (DSEDDDDEDEEIE) are compositionally biased toward acidic residues. Positions 424 to 593 (SFPSPFTNIL…SIDCGNTESE (170 aa)) constitute a Helicase C-terminal domain. Residues 621–713 (AIGHINRYCA…MPVGKETVKY (93 aa)) enclose the Dicer dsRNA-binding fold domain. Residues 718–737 (DLHDEEETSVPGRPGSTKRR) form a disordered region. The PAZ domain maps to 886–1036 (KFVEDIEKSE…LVPELCAIHP (151 aa)). 2 consecutive RNase III domains span residues 1249–1380 (TSDM…ETSG) and 1637–1795 (FENF…MDSG). Residues glutamate 1293, aspartate 1371, glutamate 1374, glutamate 1676, aspartate 1781, and glutamate 1784 each coordinate Mg(2+). The 66-residue stretch at 1820 to 1885 (VPRSPVRELL…ARRALRSLKA (66 aa)) folds into the DRBM domain.

Belongs to the helicase family. Dicer subfamily. As to quaternary structure, component of the RISC loading complex (RLC), or micro-RNA (miRNA) loading complex (miRLC), which is composed of dicer1, ago2 and tarbp2; dicer1 and tarbp2 are required to process precursor miRNAs (pre-miRNAs) to mature miRNAs and then load them onto ago2. Note that the trimeric RLC/miRLC is also referred to as RISC. It depends on Mg(2+) as a cofactor. Requires Mn(2+) as cofactor.

Its subcellular location is the cytoplasm. The enzyme catalyses Endonucleolytic cleavage to 5'-phosphomonoester.. Functionally, double-stranded RNA (dsRNA) endoribonuclease playing a central role in short dsRNA-mediated post-transcriptional gene silencing. Cleaves naturally occurring long dsRNAs and short hairpin pre-microRNAs (miRNA) into fragments of twenty-one to twenty-three nucleotides with 3' overhang of two nucleotides, producing respectively short interfering RNAs (siRNA) and mature microRNAs. SiRNAs and miRNAs serve as guide to direct the RNA-induced silencing complex (RISC) to complementary RNAs to degrade them or prevent their translation. Gene silencing mediated by siRNAs, also called RNA interference, controls the elimination of transcripts from mobile and repetitive DNA elements of the genome but also the degradation of exogenous RNA of viral origin for instance. The miRNA pathway on the other side is a mean to specifically regulate the expression of target genes. The protein is Endoribonuclease Dicer (dicer1) of Xenopus tropicalis (Western clawed frog).